A 593-amino-acid chain; its full sequence is Proteasome-associated ATPase (593 aa).

Positions 5–94 (DDADSRAARW…KEEIDRLAQP (90 aa)) form a coiled coil. Residue 281–286 (GCGKTL) participates in ATP binding. Residues 574–593 (GKGADAGRSIETASNTGQYL) form a disordered region. Polar residues predominate over residues 584-593 (ETASNTGQYL). The docks into pockets in the proteasome alpha-ring stretch occupies residues 592–593 (YL).

It belongs to the AAA ATPase family. In terms of assembly, homohexamer. Assembles into a hexameric ring structure that caps the 20S proteasome core. Strongly interacts with the prokaryotic ubiquitin-like protein Pup through a hydrophobic interface; the interacting region of ARC lies in its N-terminal coiled-coil domain. There is one Pup binding site per ARC hexamer ring. Upon ATP-binding, the C-terminus of ARC interacts with the alpha-rings of the proteasome core, possibly by binding to the intersubunit pockets.

Its pathway is protein degradation; proteasomal Pup-dependent pathway. In terms of biological role, ATPase which is responsible for recognizing, binding, unfolding and translocation of pupylated proteins into the bacterial 20S proteasome core particle. May be essential for opening the gate of the 20S proteasome via an interaction with its C-terminus, thereby allowing substrate entry and access to the site of proteolysis. Thus, the C-termini of the proteasomal ATPase may function like a 'key in a lock' to induce gate opening and therefore regulate proteolysis. This is Proteasome-associated ATPase from Salinispora tropica (strain ATCC BAA-916 / DSM 44818 / JCM 13857 / NBRC 105044 / CNB-440).